We begin with the raw amino-acid sequence, 785 residues long: Ubiquitin carboxyl-terminal hydrolase 10 (785 aa).

2 stretches are compositionally biased toward polar residues: residues Leu-113 to Glu-122 and Asp-262 to Ser-277. Disordered stretches follow at residues Leu-113–Tyr-145 and Asp-262–Thr-314. A compositionally biased stretch (basic and acidic residues) spans His-290 to Glu-304. The segment covering Ala-305 to Thr-314 has biased composition (low complexity). In terms of domain architecture, USP spans Arg-401–Val-782. The active-site Nucleophile is Cys-410. A disordered region spans residues Glu-537 to Gln-581. Positions Glu-552–Glu-568 are enriched in acidic residues. His-736 serves as the catalytic Proton acceptor.

Belongs to the peptidase C19 family. USP10 subfamily.

The protein localises to the cytoplasm. It localises to the nucleus. It carries out the reaction Thiol-dependent hydrolysis of ester, thioester, amide, peptide and isopeptide bonds formed by the C-terminal Gly of ubiquitin (a 76-residue protein attached to proteins as an intracellular targeting signal).. In terms of biological role, hydrolase that can remove conjugated ubiquitin from target proteins such as p53/TP53, RPS2/us5, RPS3/us3, RPS10/eS10, BECN1, SNX3 and CFTR. Acts as an essential regulator of p53/TP53 stability: in unstressed cells, specifically deubiquitinates p53/TP53 in the cytoplasm, leading to counteracts MDM2 action and stabilize p53/TP53. Following DNA damage, translocates to the nucleus and deubiquitinates p53/TP53, leading to regulate the p53/TP53-dependent DNA damage response. Component of a regulatory loop that controls autophagy and p53/TP53 levels. Plays a key role in 40S ribosome subunit recycling when a ribosome has stalled during translation: acts both by inhibiting formation of stress granules, which store stalled translation pre-initiation complexes, and mediating deubiquitination of 40S ribosome subunits. Deubiquitinates CFTR in early endosomes, enhancing its endocytic recycling. This Gallus gallus (Chicken) protein is Ubiquitin carboxyl-terminal hydrolase 10 (USP10).